We begin with the raw amino-acid sequence, 478 residues long: 3-isopropylmalate dehydratase large subunit (478 aa).

Residues C357, C418, and C421 each coordinate [4Fe-4S] cluster.

Belongs to the aconitase/IPM isomerase family. LeuC type 1 subfamily. As to quaternary structure, heterodimer of LeuC and LeuD. It depends on [4Fe-4S] cluster as a cofactor.

It catalyses the reaction (2R,3S)-3-isopropylmalate = (2S)-2-isopropylmalate. It participates in amino-acid biosynthesis; L-leucine biosynthesis; L-leucine from 3-methyl-2-oxobutanoate: step 2/4. Functionally, catalyzes the isomerization between 2-isopropylmalate and 3-isopropylmalate, via the formation of 2-isopropylmaleate. This is 3-isopropylmalate dehydratase large subunit from Novosphingobium aromaticivorans (strain ATCC 700278 / DSM 12444 / CCUG 56034 / CIP 105152 / NBRC 16084 / F199).